The primary structure comprises 257 residues: 1-(5-phosphoribosyl)-5-[(5-phosphoribosylamino)methylideneamino] imidazole-4-carboxamide isomerase (257 aa).

Asp-8 serves as the catalytic Proton acceptor. Asp-129 serves as the catalytic Proton donor.

Belongs to the HisA/HisF family.

It is found in the cytoplasm. It catalyses the reaction 1-(5-phospho-beta-D-ribosyl)-5-[(5-phospho-beta-D-ribosylamino)methylideneamino]imidazole-4-carboxamide = 5-[(5-phospho-1-deoxy-D-ribulos-1-ylimino)methylamino]-1-(5-phospho-beta-D-ribosyl)imidazole-4-carboxamide. It participates in amino-acid biosynthesis; L-histidine biosynthesis; L-histidine from 5-phospho-alpha-D-ribose 1-diphosphate: step 4/9. The protein is 1-(5-phosphoribosyl)-5-[(5-phosphoribosylamino)methylideneamino] imidazole-4-carboxamide isomerase of Nostoc punctiforme (strain ATCC 29133 / PCC 73102).